The chain runs to 264 residues: Thymidylate synthase (264 aa).

A dUMP-binding site is contributed by Arg-21. His-51 contacts (6R)-5,10-methylene-5,6,7,8-tetrahydrofolate. 126-127 (RR) serves as a coordination point for dUMP. The active-site Nucleophile is the Cys-146. Residues 166–169 (RSAD), Asn-177, and 207–209 (HIY) each bind dUMP. Asp-169 lines the (6R)-5,10-methylene-5,6,7,8-tetrahydrofolate pocket. Ala-263 contacts (6R)-5,10-methylene-5,6,7,8-tetrahydrofolate.

The protein belongs to the thymidylate synthase family. Bacterial-type ThyA subfamily. In terms of assembly, homodimer.

It is found in the cytoplasm. The catalysed reaction is dUMP + (6R)-5,10-methylene-5,6,7,8-tetrahydrofolate = 7,8-dihydrofolate + dTMP. Its pathway is pyrimidine metabolism; dTTP biosynthesis. Its function is as follows. Catalyzes the reductive methylation of 2'-deoxyuridine-5'-monophosphate (dUMP) to 2'-deoxythymidine-5'-monophosphate (dTMP) while utilizing 5,10-methylenetetrahydrofolate (mTHF) as the methyl donor and reductant in the reaction, yielding dihydrofolate (DHF) as a by-product. This enzymatic reaction provides an intracellular de novo source of dTMP, an essential precursor for DNA biosynthesis. In Brucella abortus (strain 2308), this protein is Thymidylate synthase.